Reading from the N-terminus, the 871-residue chain is Zinc finger protein 473 (871 aa).

One can recognise a KRAB domain in the interval Val6–Pro75. Disordered stretches follow at residues Pro47–Lys81 and Asn140–Thr164. Residues Glu71–Lys81 are compositionally biased toward polar residues. Over residues Thr145–Arg154 the composition is skewed to basic and acidic residues. Lys148 participates in a covalent cross-link: Glycyl lysine isopeptide (Lys-Gly) (interchain with G-Cter in SUMO2). The segment at Tyr209–His231 adopts a C2H2-type 1 zinc-finger fold. Residues Tyr265–His286 form a C2H2-type 2; degenerate zinc finger. A compositionally biased stretch (basic and acidic residues) spans Lys290–Ser317. Residues Lys290 to Lys318 are disordered. The tract at residues Lys312–Asp552 is interaction with SLBP/pre-mRNA complex. C2H2-type zinc fingers lie at residues Tyr320–His342, Tyr347–His369, and Ser375–His397. The C2H2-type 6; degenerate zinc-finger motif lies at Tyr403–His425. Lys419 participates in a covalent cross-link: Glycyl lysine isopeptide (Lys-Gly) (interchain with G-Cter in SUMO2). C2H2-type zinc fingers lie at residues Tyr431–His453, His459–His481, Tyr487–His509, and Tyr515–His537. Glycyl lysine isopeptide (Lys-Gly) (interchain with G-Cter in SUMO2) cross-links involve residues Lys549 and Lys558. C2H2-type zinc fingers lie at residues Phe562–His584 and Phe591–His613. Lys635 is covalently cross-linked (Glycyl lysine isopeptide (Lys-Gly) (interchain with G-Cter in SUMO2)). 8 consecutive C2H2-type zinc fingers follow at residues Phe646–His668, Phe674–His696, Leu702–His724, Tyr730–His752, Tyr758–His780, Tyr786–His808, Tyr814–His836, and Tyr842–His864.

This sequence belongs to the krueppel C2H2-type zinc-finger protein family. In terms of assembly, interacts with the SLBP/pre-mRNA complex but not with SLBP alone. Interacts with LSM11 in a U7 snRNP-dependent manner.

It is found in the nucleus. Its function is as follows. Involved in histone 3'-end pre-mRNA processing by associating with U7 snRNP and interacting with SLBP/pre-mRNA complex. Increases histone 3'-end pre-mRNA processing but has no effect on U7 snRNP levels, when overexpressed. Required for cell cycle progression from G1 to S phases. The polypeptide is Zinc finger protein 473 (ZNF473) (Homo sapiens (Human)).